A 375-amino-acid chain; its full sequence is Succinyl-diaminopimelate desuccinylase (375 aa).

His-66 is a Zn(2+) binding site. Asp-68 is a catalytic residue. Residue Asp-99 participates in Zn(2+) binding. Glu-133 serves as the catalytic Proton acceptor. Glu-134, Glu-162, and His-348 together coordinate Zn(2+).

The protein belongs to the peptidase M20A family. DapE subfamily. Homodimer. Zn(2+) serves as cofactor. Co(2+) is required as a cofactor.

It catalyses the reaction N-succinyl-(2S,6S)-2,6-diaminopimelate + H2O = (2S,6S)-2,6-diaminopimelate + succinate. It functions in the pathway amino-acid biosynthesis; L-lysine biosynthesis via DAP pathway; LL-2,6-diaminopimelate from (S)-tetrahydrodipicolinate (succinylase route): step 3/3. Functionally, catalyzes the hydrolysis of N-succinyl-L,L-diaminopimelic acid (SDAP), forming succinate and LL-2,6-diaminopimelate (DAP), an intermediate involved in the bacterial biosynthesis of lysine and meso-diaminopimelic acid, an essential component of bacterial cell walls. The protein is Succinyl-diaminopimelate desuccinylase of Escherichia coli O17:K52:H18 (strain UMN026 / ExPEC).